Consider the following 667-residue polypeptide: MLTHKTCQARKKMQVSFVIRDAEEKQHRNGVNALQLDANNGKLYSAGRDAIIRVWNTRTESNEKYIQSMEHHNDWVNDIVLCCNGRNLISASCDTTVKVWNAQKGFCMSTLRTHRDYVQALAYAKDREQVASAGLDKAIFLWDVNTLTALTASNNTVTTSSLTGSKDSIYSLAMNPSGTVIVSGSTENILRIWDPRTCMRSMKLRGHTENVRCLVVSPDGNQVVSGSSDGTIKVWNLGQQRCVQTIHVHKEGVWSLLMSENFQYIISGSRDRNIIVTEMRNPSNKMLVCEEQAPVLSLGYNIDKTGVWATTWNSDIRCWKLPMYDRCTLNSSGGLDAQWTQGGTELACIKGGAAIKECTVLNDKRYIITKDSQDQVVVYDVLRVVKKEQLGAVDYEAEVKKRNKQVYIPNWFTVDLKTGMPTIVLGQEEVDCFAAWVSIEAGLPECVDPTTEIKINYGKLLLEALLEHWTPHNMPPNDMDQDMHGNGYFQVPKHTPVIFSEVGGRTVCRLLVRDAAGDSESTLLQETAPQWVTDVVIEKNIPKFLKIPFFLQPHPQMTKPERTKKDRLVANEFIQCRKVCEHVLEKVLNAETTPSGGNANNSLQNSQSDANSEGSQLPAEERIELWCNDVVVDPNMDLRTVRHFIWKQSTDLTFQYKTKQNFNYDGK.

8 WD repeats span residues 26–65 (QHRNGVNALQLDANNGKLYSAGRDAIIRVWNTRTESNEKY), 71–110 (HHNDWVNDIVLCCNGRNLISASCDTTVKVWNAQKGFCMST), 113–152 (THRDYVQALAYAKDREQVASAGLDKAIFLWDVNTLTALTA), 164–203 (GSKDSIYSLAMNPSGTVIVSGSTENILRIWDPRTCMRSMK), 206–245 (GHTENVRCLVVSPDGNQVVSGSSDGTIKVWNLGQQRCVQT), 248–287 (VHKEGVWSLLMSENFQYIISGSRDRNIIVTEMRNPSNKML), 290–329 (EEQAPVLSLGYNIDKTGVWATTWNSDIRCWKLPMYDRCTL), and 350–389 (KGGAAIKECTVLNDKRYIITKDSQDQVVVYDVLRVVKKEQ). Residues 591–615 (ETTPSGGNANNSLQNSQSDANSEGS) form a disordered region.

It belongs to the WD repeat WDR48 family. In terms of assembly, catalytic component of the Usp12-46 deubiquitylase complex consisting of Usp12-46, Wdr20 and Uaf1; regulatory subunit that, together wtih Wdr20, stabilizes Usp12-46. The Usp12-46 deubiquitylase complex associates with arr/arrow; the interaction leads to deubiquitination and stabilization of arr/arrow.

Its function is as follows. Regulatory component of the Usp12-46 deubiquitylase complex. activates deubiquitination by increasing the catalytic turnover without increasing the affinity of deubiquitinating enzymes for the substrate. The complex deubiquitylates the wg/wingless-signaling receptor arr/arrow, which stabilizes the receptor and increases its concentration at the cell surface; this enhances the sensitivity of cells to wg/wingless-signal stimulation. This increases the amplitude and spatial range of the signaling response to the wg/wingless morphogen gradient, facilitating the precise concentration-dependent regulation of its target genes. Together with Wdr20 and Usp12-46 required for wg/wingless-mediated signaling in the wing imaginal disc and for wg/wingless-dependent regulation of intestinal stem cell proliferation. In Drosophila ananassae (Fruit fly), this protein is WD repeat-containing protein 48 homolog.